The sequence spans 486 residues: Membrane-bound lytic murein transglycosylase F (486 aa).

The signal sequence occupies residues 1-21 (MKRLKINYILIGVVTLLLALA). Positions 22–268 (LWPNITWRGG…RLEEKYLGHV (247 aa)) are non-LT domain. Residues 269–486 (GSFDYVDTKT…AVTPELALNF (218 aa)) are LT domain. Residue E313 is part of the active site.

In the N-terminal section; belongs to the bacterial solute-binding protein 3 family. This sequence in the C-terminal section; belongs to the transglycosylase Slt family.

Its subcellular location is the cell outer membrane. It catalyses the reaction Exolytic cleavage of the (1-&gt;4)-beta-glycosidic linkage between N-acetylmuramic acid (MurNAc) and N-acetylglucosamine (GlcNAc) residues in peptidoglycan, from either the reducing or the non-reducing ends of the peptidoglycan chains, with concomitant formation of a 1,6-anhydrobond in the MurNAc residue.. In terms of biological role, murein-degrading enzyme that degrades murein glycan strands and insoluble, high-molecular weight murein sacculi, with the concomitant formation of a 1,6-anhydromuramoyl product. Lytic transglycosylases (LTs) play an integral role in the metabolism of the peptidoglycan (PG) sacculus. Their lytic action creates space within the PG sacculus to allow for its expansion as well as for the insertion of various structures such as secretion systems and flagella. This is Membrane-bound lytic murein transglycosylase F from Serratia proteamaculans (strain 568).